The sequence spans 576 residues: Arginine--tRNA ligase (576 aa).

Residues 122–132 (PNVAKEMHVGH) carry the 'HIGH' region motif.

The protein belongs to the class-I aminoacyl-tRNA synthetase family. Monomer.

It localises to the cytoplasm. It carries out the reaction tRNA(Arg) + L-arginine + ATP = L-arginyl-tRNA(Arg) + AMP + diphosphate. The sequence is that of Arginine--tRNA ligase from Mannheimia succiniciproducens (strain KCTC 0769BP / MBEL55E).